The primary structure comprises 24 residues: Carboxypeptidase 1 (24 aa).

N-linked (GlcNAc...) asparagine glycosylation is found at Asn3 and Asn11.

This sequence belongs to the peptidase S10 family. Monomer. In terms of processing, contains both N- and O-linked sugar chains. The N-linked oligosaccharides are unique structures of Man(10)GlcNAc(2) and Man(11)GlcNAc(2). Deglycosylation does neither affect catalytic activity, pH, thermal stability, or resistance to proteolysis of the enzyme.

The protein localises to the secreted. Inhibited by DFP. In terms of biological role, removes acidic, neutral and basic amino acids as well as proline from the C-terminal position. Digests preferentially peptides containing a hydrophobic residue in P1' position, as well as arginine, lysine or phenylalanine in P1 position of ester substrate. Catalyzes also peptide synthesis. This chain is Carboxypeptidase 1, found in Aspergillus niger.